The chain runs to 345 residues: Anthranilate phosphoribosyltransferase (345 aa).

Residues 77–79 (TAG), 82–83 (GD), Thr87, 89–92 (NVST), 106–114 (KHGNRAVSG), and Ser118 each bind 5-phospho-alpha-D-ribose 1-diphosphate. Gly79 serves as a coordination point for anthranilate. Residue Ser91 participates in Mg(2+) binding. Residue Asn109 participates in anthranilate binding. Residue Arg164 coordinates anthranilate. Mg(2+) is bound by residues Asp223 and Glu224.

Belongs to the anthranilate phosphoribosyltransferase family. In terms of assembly, homodimer. Requires Mg(2+) as cofactor.

The enzyme catalyses N-(5-phospho-beta-D-ribosyl)anthranilate + diphosphate = 5-phospho-alpha-D-ribose 1-diphosphate + anthranilate. It functions in the pathway amino-acid biosynthesis; L-tryptophan biosynthesis; L-tryptophan from chorismate: step 2/5. Its function is as follows. Catalyzes the transfer of the phosphoribosyl group of 5-phosphorylribose-1-pyrophosphate (PRPP) to anthranilate to yield N-(5'-phosphoribosyl)-anthranilate (PRA). This chain is Anthranilate phosphoribosyltransferase, found in Saccharolobus solfataricus (strain ATCC 35092 / DSM 1617 / JCM 11322 / P2) (Sulfolobus solfataricus).